Consider the following 393-residue polypeptide: 5-amino-6-(D-ribitylamino)uracil--L-tyrosine 4-hydroxyphenyl transferase (393 aa).

Positions 71 to 318 (VTYVINRNIN…TAVSRIFLGN (248 aa)) constitute a Radical SAM core domain. [4Fe-4S] cluster contacts are provided by C85, C89, and C92.

Belongs to the radical SAM superfamily. CofH family. As to quaternary structure, consists of two subunits, CofG and CofH. It depends on [4Fe-4S] cluster as a cofactor.

It carries out the reaction 5-amino-6-(D-ribitylamino)uracil + L-tyrosine + S-adenosyl-L-methionine = 5-amino-5-(4-hydroxybenzyl)-6-(D-ribitylimino)-5,6-dihydrouracil + 2-iminoacetate + 5'-deoxyadenosine + L-methionine + H(+). The protein operates within cofactor biosynthesis; coenzyme F0 biosynthesis. Its function is as follows. Catalyzes the radical-mediated synthesis of 5-amino-5-(4-hydroxybenzyl)-6-(D-ribitylimino)-5,6-dihydrouracil from 5-amino-6-(D-ribitylamino)uracil and L-tyrosine. The chain is 5-amino-6-(D-ribitylamino)uracil--L-tyrosine 4-hydroxyphenyl transferase from Trichodesmium erythraeum (strain IMS101).